A 160-amino-acid chain; its full sequence is MPSFDIVSEVKMNEVLNAVDNANRELATRFDFRGVEASFELNKEEVKLEADADFQLKQMVEILRAALLKRNIENSSMDVGDSVHSGKRFHLNVKFKQGIEKEIAKKLVKLIKDSKIKVQVAIQGDEVRVTGKKRDDLQEAMALVRGAELGQPMQFQNFRD.

The protein belongs to the YajQ family.

Functionally, nucleotide-binding protein. The protein is Nucleotide-binding protein ASA_3207 of Aeromonas salmonicida (strain A449).